We begin with the raw amino-acid sequence, 802 residues long: Bifunctional purine biosynthetic protein ADE5,7 (802 aa).

Residues 1 to 444 (MPEITAFPQP…FRRDIAYRAL (444 aa)) form a GARS region. One can recognise an ATP-grasp domain in the interval 126 to 339 (KEFMARHNIP…LAEVLLACVE (214 aa)). 157–218 (KPFTSGRSVI…EEYLSGPEIS (62 aa)) provides a ligand contact to ATP. Residues glutamate 307 and asparagine 309 each coordinate Mg(2+). Residues 455-788 (LTYAAAGVSV…EAWVIGEVQE (334 aa)) are AIRS.

In the N-terminal section; belongs to the GARS family. This sequence in the C-terminal section; belongs to the AIR synthase family. As to quaternary structure, homodimer. Mg(2+) serves as cofactor. The cofactor is Mn(2+).

It is found in the cytoplasm. Its subcellular location is the cytosol. It catalyses the reaction 2-formamido-N(1)-(5-O-phospho-beta-D-ribosyl)acetamidine + ATP = 5-amino-1-(5-phospho-beta-D-ribosyl)imidazole + ADP + phosphate + H(+). The enzyme catalyses 5-phospho-beta-D-ribosylamine + glycine + ATP = N(1)-(5-phospho-beta-D-ribosyl)glycinamide + ADP + phosphate + H(+). It participates in purine metabolism; IMP biosynthesis via de novo pathway; 5-amino-1-(5-phospho-D-ribosyl)imidazole from N(2)-formyl-N(1)-(5-phospho-D-ribosyl)glycinamide: step 2/2. The protein operates within purine metabolism; IMP biosynthesis via de novo pathway; N(1)-(5-phospho-D-ribosyl)glycinamide from 5-phospho-alpha-D-ribose 1-diphosphate: step 2/2. Catalyzes the second and fifth step in the 'de novo' purine biosynthesis pathway; contains phosphoribosylamine--glycine ligase (GARS) and phosphoribosylformylglycinamidine cyclo-ligase (AIRS) activities. The chain is Bifunctional purine biosynthetic protein ADE5,7 from Cryptococcus neoformans var. grubii serotype A (strain H99 / ATCC 208821 / CBS 10515 / FGSC 9487) (Filobasidiella neoformans var. grubii).